The chain runs to 34 residues: Cytochrome b6-f complex subunit 5 (34 aa).

The chain crosses the membrane as a helical span at residues 5–25; sequence LLSGIVLGLVPVTLAGLFVTA.

This sequence belongs to the PetG family. The 4 large subunits of the cytochrome b6-f complex are cytochrome b6, subunit IV (17 kDa polypeptide, PetD), cytochrome f and the Rieske protein, while the 4 small subunits are PetG, PetL, PetM and PetN. The complex functions as a dimer.

Its subcellular location is the plastid. The protein localises to the chloroplast thylakoid membrane. In terms of biological role, component of the cytochrome b6-f complex, which mediates electron transfer between photosystem II (PSII) and photosystem I (PSI), cyclic electron flow around PSI, and state transitions. PetG is required for either the stability or assembly of the cytochrome b6-f complex. The chain is Cytochrome b6-f complex subunit 5 from Oltmannsiellopsis viridis (Marine flagellate).